The primary structure comprises 253 residues: Imidazole glycerol phosphate synthase subunit HisF (253 aa).

Catalysis depends on residues Asp-11 and Asp-130.

This sequence belongs to the HisA/HisF family. As to quaternary structure, heterodimer of HisH and HisF.

The protein localises to the cytoplasm. It carries out the reaction 5-[(5-phospho-1-deoxy-D-ribulos-1-ylimino)methylamino]-1-(5-phospho-beta-D-ribosyl)imidazole-4-carboxamide + L-glutamine = D-erythro-1-(imidazol-4-yl)glycerol 3-phosphate + 5-amino-1-(5-phospho-beta-D-ribosyl)imidazole-4-carboxamide + L-glutamate + H(+). The protein operates within amino-acid biosynthesis; L-histidine biosynthesis; L-histidine from 5-phospho-alpha-D-ribose 1-diphosphate: step 5/9. IGPS catalyzes the conversion of PRFAR and glutamine to IGP, AICAR and glutamate. The HisF subunit catalyzes the cyclization activity that produces IGP and AICAR from PRFAR using the ammonia provided by the HisH subunit. This chain is Imidazole glycerol phosphate synthase subunit HisF, found in Cereibacter sphaeroides (strain ATCC 17025 / ATH 2.4.3) (Rhodobacter sphaeroides).